A 217-amino-acid polypeptide reads, in one-letter code: MPETEKPLFGHPWIFIRGVPSLNFLPPEGPLEVAFAGRSNVGKSSLINALVGQKGLARTSNTPGRTQELNYFVPDGYSGESGDMPPMAIVDMPGYGYAQAPKEQVDKWTKLVFDYLRGRATLKRVYVLIDSRHGIKKNDDDVLDLLDKAAVSYQIVLTKTDKIKAPAVPKLLAETAEKIRKRPAAYPGVLSTSSEKGDGLDDLRQAIGETVGVARWK.

The 185-residue stretch at 29 to 213 (GPLEVAFAGR…RQAIGETVGV (185 aa)) folds into the EngB-type G domain. GTP-binding positions include 37-44 (GRSNVGKS), 64-68 (GRTQE), 91-94 (DMPG), 158-161 (TKTD), and 192-194 (TSS). Residues S44 and T66 each coordinate Mg(2+).

Belongs to the TRAFAC class TrmE-Era-EngA-EngB-Septin-like GTPase superfamily. EngB GTPase family. It depends on Mg(2+) as a cofactor.

In terms of biological role, necessary for normal cell division and for the maintenance of normal septation. The chain is Probable GTP-binding protein EngB from Rhizobium leguminosarum bv. trifolii (strain WSM2304).